Reading from the N-terminus, the 479-residue chain is Ammonium transporter 3 member 2 (479 aa).

11 helical membrane-spanning segments follow: residues 34-54, 59-79, 139-159, 164-184, 202-222, 237-257, 272-292, 297-317, 321-341, 355-375, and 407-427; these read VAAT…YGGV, WAVN…ICWV, VVYF…GSLL, FLAW…VGAF, GGYV…YWVG, ILFT…FNGG, NTNI…VIFF, VVGA…AAGV, WAAL…MMIL, LGVF…TGLF, and IAGG…ICLA.

This sequence belongs to the ammonia transporter channel (TC 1.A.11.2) family.

Its subcellular location is the membrane. In terms of biological role, involved in ammonium transport. This Oryza sativa subsp. japonica (Rice) protein is Ammonium transporter 3 member 2 (AMT3-2).